The following is a 503-amino-acid chain: Maturase K (503 aa).

The protein belongs to the intron maturase 2 family. MatK subfamily.

The protein localises to the plastid. It localises to the chloroplast. Functionally, usually encoded in the trnK tRNA gene intron. Probably assists in splicing its own and other chloroplast group II introns. The chain is Maturase K from Vicia villosa (Hairy vetch).